Reading from the N-terminus, the 610-residue chain is Mitochondrial import receptor subunit TOM70 (610 aa).

Ala-2 is modified (N-acetylalanine). The Mitochondrial intermembrane segment spans residues Ala-2–Arg-41. A helical membrane pass occupies residues Trp-42–Trp-62. The Cytoplasmic segment spans residues Ser-63–Leu-610. Residues Arg-69 to Glu-109 form a disordered region. An Omega-N-methylarginine modification is found at Arg-74. Positions Ala-93–Leu-108 are enriched in low complexity. A phosphoserine mark is found at Ser-94, Ser-99, Ser-104, Ser-107, and Ser-112. TPR repeat units lie at residues Ala-116–Glu-149 and Ser-155–Tyr-188. At Lys-187 the chain carries N6-acetyllysine. Lys-277 is covalently cross-linked (Glycyl lysine isopeptide (Lys-Gly) (interchain with G-Cter in SUMO2)). 8 TPR repeats span residues Glu-296–Tyr-329, Ala-331–Asn-364, Ala-369–Asn-402, Ser-403–Phe-436, Cys-444–Cys-477, Ala-478–Asn-511, Thr-513–Cys-546, and Asp-547–Glu-580.

It belongs to the Tom70 family. Forms part of the preprotein translocase complex of the outer mitochondrial membrane (TOM complex) which consists of at least 7 different proteins (TOMM5, TOMM6, TOMM7, TOMM20, TOMM22, TOMM40 and TOMM70). Interacts with CAPN8. Interacts with TRADD, TRAF6 and STING. Interacts with MAVS. Interacts with HSPA8 and HSP90AA1; both interactions are required for preprotein mitochondrial import. The interaction with HSP90AA1 is direct and mediates the association of TOMM70 with IRF3 and TBK1. Upon mitochondrial depolarization, interacts with PINK1; the interaction is required for PINK1-TOM-TIM23 supercomplex formation which is critical for PINK1 stabilization at the outer mitochondrial membrane, kinase activation and downstream mitophagy.

The protein resides in the mitochondrion outer membrane. Its function is as follows. Acts as a receptor of the preprotein translocase complex of the outer mitochondrial membrane (TOM complex). Recognizes and mediates the translocation of mitochondrial preproteins from the cytosol into the mitochondria in a chaperone dependent manner. Mediates TBK1 and IRF3 activation induced by MAVS in response to Sendai virus infection and promotes host antiviral responses during virus infection. The chain is Mitochondrial import receptor subunit TOM70 from Rattus norvegicus (Rat).